Consider the following 427-residue polypeptide: mRNA cap guanine-N(7) methyltransferase (427 aa).

The tract at residues 1–79 (MSLNYEQNAA…EPETEAASGA (79 aa)) is disordered. A phosphoserine mark is found at serine 22, serine 24, serine 29, serine 46, and serine 48. Basic and acidic residues predominate over residues 44-57 (HVSKSPREYYDEPG). The 309-residue stretch at 103-411 (SKIFFMRNFN…LYLVCAFKKC (309 aa)) folds into the mRNA cap 0 methyltransferase domain. Residue 112–113 (NN) coordinates mRNA. Positions 116, 143, 165, 202, 225, and 230 each coordinate S-adenosyl-L-methionine.

This sequence belongs to the class I-like SAM-binding methyltransferase superfamily. mRNA cap 0 methyltransferase family.

It is found in the nucleus. The catalysed reaction is a 5'-end (5'-triphosphoguanosine)-ribonucleoside in mRNA + S-adenosyl-L-methionine = a 5'-end (N(7)-methyl 5'-triphosphoguanosine)-ribonucleoside in mRNA + S-adenosyl-L-homocysteine. Functionally, mRNA-capping methyltransferase that methylates the N7 position of the added guanosine to the 5'-cap structure of mRNAs. Binds RNA containing 5'-terminal GpppC. In Drosophila melanogaster (Fruit fly), this protein is mRNA cap guanine-N(7) methyltransferase.